The primary structure comprises 479 residues: Protein TRIGALACTOSYLDIACYLGLYCEROL 4, chloroplastic (479 aa).

Over 288–310 (VFLSSPHVAVSGIIGSVMTAAFG) the chain traverses the membrane.

Homodimer. Forms dimeric beta-barrel. Interacts with TGD5.

It is found in the plastid. The protein resides in the chloroplast outer membrane. Its subcellular location is the endoplasmic reticulum. Involved in lipid transfer from the endoplasmic reticulum (ER) to plastids. Specifically binds phosphatidic acid (PtdOH). The protein is Protein TRIGALACTOSYLDIACYLGLYCEROL 4, chloroplastic of Arabidopsis thaliana (Mouse-ear cress).